The sequence spans 212 residues: V-type ATP synthase subunit E (212 aa).

It belongs to the V-ATPase E subunit family.

In terms of biological role, produces ATP from ADP in the presence of a proton gradient across the membrane. This chain is V-type ATP synthase subunit E, found in Nitrosococcus oceani (strain ATCC 19707 / BCRC 17464 / JCM 30415 / NCIMB 11848 / C-107).